Here is a 621-residue protein sequence, read N- to C-terminus: UvrABC system protein C (621 aa).

The GIY-YIG domain maps to 20-98 (TAPGVYRMYA…IKSLTPRYNV (79 aa)). One can recognise a UVR domain in the interval 207–242 (DLLAEELIQAMQVASEHLEFEQAARLRDLLTSLRSM).

Belongs to the UvrC family. In terms of assembly, interacts with UvrB in an incision complex.

The protein localises to the cytoplasm. Functionally, the UvrABC repair system catalyzes the recognition and processing of DNA lesions. UvrC both incises the 5' and 3' sides of the lesion. The N-terminal half is responsible for the 3' incision and the C-terminal half is responsible for the 5' incision. This Xylella fastidiosa (strain Temecula1 / ATCC 700964) protein is UvrABC system protein C.